Here is a 159-residue protein sequence, read N- to C-terminus: MKRGLTVAVAGAAILVAGLSGCSSNKSTTGSGETTTAAGTTASPGAASGPKVVIDGKDQNVTGSVVCTTAAGNVNIAIGGAATGIAAVLTDGNPPEVKSVGLGNVNGVTLGYTSGTGQGNASATKDGSHYKITGTATGVDMANPMSPVNKSFEIEVTCS.

An N-terminal signal peptide occupies residues 1-21; sequence MKRGLTVAVAGAAILVAGLSG. The N-palmitoyl cysteine moiety is linked to residue cysteine 22. The S-diacylglycerol cysteine moiety is linked to residue cysteine 22. A disordered region spans residues 24 to 51; that stretch reads SNKSTTGSGETTTAAGTTASPGAASGPK. Over residues 27 to 49 the composition is skewed to low complexity; that stretch reads STTGSGETTTAAGTTASPGAASG.

It belongs to the mycobacterial 19 kDa antigen family. Modified by Lgt on Cys-22 with an S-linked diacylglycerol with a mixture of C16, C18 and C19 fatty acids, signal peptide is removed by LspA, modifed by Lnt with an amide-linked mixture of C16 and C19 fatty acids.

It localises to the cell membrane. Functionally, might be involved in ligand transport. A host TLR2 agonist, modifies host gene expression in response to pathogen. This chain is Lipoprotein LpqH (lpqH), found in Mycobacterium bovis (strain ATCC BAA-935 / AF2122/97).